The chain runs to 182 residues: Large ribosomal subunit protein uL6 (182 aa).

The protein belongs to the universal ribosomal protein uL6 family. As to quaternary structure, part of the 50S ribosomal subunit.

In terms of biological role, this protein binds to the 23S rRNA, and is important in its secondary structure. It is located near the subunit interface in the base of the L7/L12 stalk, and near the tRNA binding site of the peptidyltransferase center. The protein is Large ribosomal subunit protein uL6 of Nostoc punctiforme (strain ATCC 29133 / PCC 73102).